Reading from the N-terminus, the 268-residue chain is Cytochrome c oxidase subunit 3 (268 aa).

The next 7 membrane-spanning stretches (helical) occupy residues 19-39, 49-69, 85-105, 124-144, 165-185, 202-222, and 245-265; these read PWPI…VLTM, FDLG…DIVI, LIIG…SVFW, PVGI…IILL, SIIG…FQAF, VFFA…LFLF, and ILYW…VYFW.

It belongs to the cytochrome c oxidase subunit 3 family. In terms of assembly, component of the cytochrome c oxidase (complex IV, CIV), a multisubunit enzyme composed of a catalytic core of 3 subunits and several supernumerary subunits. The complex exists as a monomer or a dimer and forms supercomplexes (SCs) in the inner mitochondrial membrane with ubiquinol-cytochrome c oxidoreductase (cytochrome b-c1 complex, complex III, CIII).

Its subcellular location is the mitochondrion inner membrane. It catalyses the reaction 4 Fe(II)-[cytochrome c] + O2 + 8 H(+)(in) = 4 Fe(III)-[cytochrome c] + 2 H2O + 4 H(+)(out). Its function is as follows. Component of the cytochrome c oxidase, the last enzyme in the mitochondrial electron transport chain which drives oxidative phosphorylation. The respiratory chain contains 3 multisubunit complexes succinate dehydrogenase (complex II, CII), ubiquinol-cytochrome c oxidoreductase (cytochrome b-c1 complex, complex III, CIII) and cytochrome c oxidase (complex IV, CIV), that cooperate to transfer electrons derived from NADH and succinate to molecular oxygen, creating an electrochemical gradient over the inner membrane that drives transmembrane transport and the ATP synthase. Cytochrome c oxidase is the component of the respiratory chain that catalyzes the reduction of oxygen to water. Electrons originating from reduced cytochrome c in the intermembrane space (IMS) are transferred via the dinuclear copper A center (CU(A)) of subunit 2 and heme A of subunit 1 to the active site in subunit 1, a binuclear center (BNC) formed by heme A3 and copper B (CU(B)). The BNC reduces molecular oxygen to 2 water molecules using 4 electrons from cytochrome c in the IMS and 4 protons from the mitochondrial matrix. The protein is Cytochrome c oxidase subunit 3 (COIII) of Schizophyllum commune (Split gill fungus).